Consider the following 408-residue polypeptide: UDP-glucose 4-epimerase 2 (408 aa).

NAD(+) is bound at residue 13–44 (TVLVTGGAGYIGSHAVLQLLLAGFRAVVVDNL). S138 serves as a coordination point for substrate. Y162 serves as the catalytic Proton acceptor. The disordered stretch occupies residues 369 to 408 (GSPKQNGHCTNGFSESTRHNGHNGYGLVDSAKHNGNGHFH). The span at 370–383 (SPKQNGHCTNGFSE) shows a compositional bias: polar residues.

The protein belongs to the NAD(P)-dependent epimerase/dehydratase family. Requires NAD(+) as cofactor.

The enzyme catalyses UDP-alpha-D-glucose = UDP-alpha-D-galactose. The protein operates within carbohydrate metabolism; galactose metabolism. Its function is as follows. Catalyzes the interconversion between UDP-glucose and UDP-galactose. In Oryza sativa subsp. japonica (Rice), this protein is UDP-glucose 4-epimerase 2 (UGE-2).